The chain runs to 36 residues: Glycine-rich protein GWK (36 aa).

Positions 1 to 36 (YKRGGGGWGGGGGWKGGGGGGGGWKGGGGGGKGGGG) are disordered.

Functionally, possesses antifungal activity against a number of phytopathogenic fungi, including H.sativum and F.culmorum. This Cucumis melo (Muskmelon) protein is Glycine-rich protein GWK.